The primary structure comprises 546 residues: Chaperonin GroEL 1 (546 aa).

ATP is bound by residues 30-33 (TLGP), K51, 87-91 (DGTTT), G415, 479-481 (NAA), and D495. Residues 526 to 546 (KEDAPMPGGMPGGMGGMGMDM) are disordered. Residues 534 to 546 (GMPGGMGGMGMDM) are compositionally biased toward gly residues.

Belongs to the chaperonin (HSP60) family. Forms a cylinder of 14 subunits composed of two heptameric rings stacked back-to-back. Interacts with the co-chaperonin GroES.

The protein resides in the cytoplasm. The enzyme catalyses ATP + H2O + a folded polypeptide = ADP + phosphate + an unfolded polypeptide.. Functionally, together with its co-chaperonin GroES, plays an essential role in assisting protein folding. The GroEL-GroES system forms a nano-cage that allows encapsulation of the non-native substrate proteins and provides a physical environment optimized to promote and accelerate protein folding. The sequence is that of Chaperonin GroEL 1 from Burkholderia pseudomallei (strain 1106a).